Consider the following 440-residue polypeptide: Dynein axonemal assembly factor 11 (440 aa).

LRR repeat units follow at residues isoleucine 20–cysteine 43, arginine 44–leucine 65, lysine 66–serine 89, and leucine 90–lysine 110. The LRRCT domain maps to tyrosine 128 to aspartate 146. Residues glutamate 178–glutamate 192 show a composition bias toward basic and acidic residues. Disordered stretches follow at residues glutamate 178–isoleucine 267 and proline 363–methionine 440. Residues isoleucine 193–serine 211 show a composition bias toward polar residues. The span at serine 236–lysine 259 shows a compositional bias: basic and acidic residues. One can recognise a CS domain in the interval valine 276 to threonine 374. Over residues arginine 369–asparagine 378 the composition is skewed to polar residues. Composition is skewed to basic and acidic residues over residues asparagine 379–leucine 392 and glycine 420–valine 431.

The protein belongs to the tilB family. Interacts with dvl2. Interacts with kur. In terms of tissue distribution, expressed in kinocilia of hair cells.

The protein localises to the cytoplasm. It localises to the dynein axonemal particle. It is found in the cell projection. The protein resides in the cilium. Plays a crucial role in regulating cilia motility in pronephric tubules, cloaca and neural tube. Required for establishing left-right asymmetry of the body plan; controls cell fate and convergent extension (CE) movements during gastrulation, respectively, via the Wnt and the planar cell polarity (PCP) signaling pathways. Required for the proper development of renal glomeruli and tubules. The polypeptide is Dynein axonemal assembly factor 11 (dnaaf11) (Danio rerio (Zebrafish)).